The primary structure comprises 590 residues: MAEVRSRSRRTESNWATICCSAFSCLQLYWARIVLRKWFNVSASESDYSADSDDDYEDRSQEFDPISSGVTNPRVDTDGNVIYRPKLRRRNSETFRMQYIDTKAIRICAGTWNVGGRVPSSDLDIDGWLDTLEPADIYVLGLQEIVPLNAGNIFGMEDDQPALEWENLIRDALNRVQPRKLKIKSHSDPPSPSKFKQPEEVPYSVEDMFVETSHDACDGISSMDNKLNSVESTDVPIVSEDSLTNIDVLGSTNDNASCLPIQEYLQRQFSTPNTPDRSLSMQINSDSKREERFSYTERVGLSWPEPPLRLLNQYVSERRGSFKSVNLTITNLRKPSYVRIVSKQMVGVFLTIWVRRNLRKHISNLCVSTVGVGIMGYIGNKGSVSVSMSIYQTPFCFLCTHLSSGEKDTDQEKRNDDVREIHRRTQFLPHSLNANELPRSICNHERIIWLGDLNYRINLSYEKTHELIARKEWQRLVEYDQLSREMTKGNLFEGWSEGTLDFAPTYKYEIDSENYIGDDPESGKRRPAWCDRIIWNGKGMKLFNYRRNEIKLSDHRPVTATFLAEVEVLSPRKLQHALTLTYAEIQGLDA.

A disordered region spans residues 47-73; the sequence is DYSADSDDDYEDRSQEFDPISSGVTNP. The segment covering 48–57 has biased composition (acidic residues); the sequence is YSADSDDDYE. The residue at position 60 (S60) is a Phosphoserine. Catalytic stretches follow at residues 445-460 and 523-538; these read ERIIWLGDLNYRINLS and GKRRPAWCDRIIWNGK.

Belongs to the inositol polyphosphate 5-phosphatase family. In terms of tissue distribution, expressed ubiquitously.

It catalyses the reaction 1D-myo-inositol 1,4,5-trisphosphate + H2O = 1D-myo-inositol 1,4-bisphosphate + phosphate. The catalysed reaction is 1D-myo-inositol 1,3,4,5-tetrakisphosphate + H2O = 1D-myo-inositol 1,3,4-trisphosphate + phosphate. In terms of biological role, has phosphatase activity toward Ins(1,4,5)P3 and Ins(1,3,4,5)P4, but not toward Ins(1,4)P2, Ins(1)P. Seems to be involved in the abscisic acid (ABA) signaling pathway. Could also be able to hydrolyze PtdIns(4,5)P2 and PtdIns(3,4,5)P3. This chain is Type I inositol polyphosphate 5-phosphatase 1, found in Arabidopsis thaliana (Mouse-ear cress).